The sequence spans 206 residues: ATP phosphoribosyltransferase (206 aa).

This sequence belongs to the ATP phosphoribosyltransferase family. Short subfamily. Heteromultimer composed of HisG and HisZ subunits.

Its subcellular location is the cytoplasm. It carries out the reaction 1-(5-phospho-beta-D-ribosyl)-ATP + diphosphate = 5-phospho-alpha-D-ribose 1-diphosphate + ATP. Its pathway is amino-acid biosynthesis; L-histidine biosynthesis; L-histidine from 5-phospho-alpha-D-ribose 1-diphosphate: step 1/9. Functionally, catalyzes the condensation of ATP and 5-phosphoribose 1-diphosphate to form N'-(5'-phosphoribosyl)-ATP (PR-ATP). Has a crucial role in the pathway because the rate of histidine biosynthesis seems to be controlled primarily by regulation of HisG enzymatic activity. The polypeptide is ATP phosphoribosyltransferase (Wolinella succinogenes (strain ATCC 29543 / DSM 1740 / CCUG 13145 / JCM 31913 / LMG 7466 / NCTC 11488 / FDC 602W) (Vibrio succinogenes)).